Reading from the N-terminus, the 389-residue chain is uncharacterized protein (389 aa).

Disordered stretches follow at residues 119–156 (SSLF…GENQ), 180–233 (PTSK…SSMG), 294–321 (SIPS…TSRT), and 362–389 (PEDM…EIKV). Residues 137–155 (SPSTINIEKNRHSSNSGEN) are compositionally biased toward polar residues. Residues 190-204 (DDGDEEDDTDDEGEA) are compositionally biased toward acidic residues.

This is an uncharacterized protein from Caenorhabditis elegans.